Reading from the N-terminus, the 1138-residue chain is 2'-5'-oligoadenylate synthase 3 (1138 aa).

An N-acetylmethionine modification is found at methionine 1. The interval 6-341 (TPAGALDKLV…GVLVQPWEGP (336 aa)) is OAS domain 1. Interaction with dsRNA stretches follow at residues 12 to 56 (DKLV…VIRI) and 185 to 199 (EPRKNFVNTRPAKLK). Residues 342–462 (GLPRAGILDL…GSRMSPDLSQ (121 aa)) form a linker region. A compositionally biased stretch (basic and acidic residues) spans 370-379 (LAVQSKERSQ). Disordered stretches follow at residues 370 to 403 (LAVQSKERSQKPSNSAPGFPEAATKIPAMPNPSA) and 434 to 459 (TQSTASSHMPPDRSSISTAGSRMSPD). A compositionally biased stretch (polar residues) spans 447-459 (SSISTAGSRMSPD). OAS domain stretches follow at residues 463–793 (IPSK…PWDV) and 801–1135 (TLAE…WPVK). Serine 855 lines the ATP pocket. Positions 867, 869, and 939 each coordinate Mg(2+). The ATP site is built by arginine 998, lysine 1001, and glutamine 1020.

Belongs to the 2-5A synthase family. Monomer. It depends on Mg(2+) as a cofactor. In terms of tissue distribution, intestine.

The protein localises to the cytoplasm. It is found in the nucleus. It carries out the reaction 3 ATP = 5'-triphosphoadenylyl-(2'-&gt;5')-adenylyl-(2'-&gt;5')-adenosine + 2 diphosphate. Produced as a latent enzyme which is activated by dsRNA generated during the course of viral infection. Strongly activated by long dsRNAs at least 50 nucleotides in length. ssRNA does not activate the enzyme. Interferon-induced, dsRNA-activated antiviral enzyme which plays a critical role in cellular innate antiviral response. In addition, it may also play a role in other cellular processes such as apoptosis, cell growth, differentiation and gene regulation. Synthesizes preferentially dimers of 2'-5'-oligoadenylates (2-5A) from ATP which then bind to the inactive monomeric form of ribonuclease L (RNase L) leading to its dimerization and subsequent activation. Activation of RNase L leads to degradation of cellular as well as viral RNA, resulting in the inhibition of protein synthesis, thus terminating viral replication. Can mediate the antiviral effect via the classical RNase L-dependent pathway or an alternative antiviral pathway independent of RNase L. The polypeptide is 2'-5'-oligoadenylate synthase 3 (Oas3) (Mus musculus (Mouse)).